Consider the following 820-residue polypeptide: Ribosome biogenesis protein ERB1 (820 aa).

A disordered region spans residues 1–111 (MVRSRSNSVK…SDAGDDEVDP (111 aa)). The segment covering 9 to 19 (VKKDLKRKVDE) has biased composition (basic and acidic residues). A compositionally biased stretch (acidic residues) spans 20–48 (PVDVQDEFDVEGLIDEGDSDDEDEAEQEV). Residues 53 to 64 (VTKDKKNTSKTE) show a composition bias toward basic and acidic residues. The span at 65-110 (NEEDADDESDSDAELEALIGEEEDLSGSELEDELAYFSDAGDDEVD) shows a compositional bias: acidic residues. Residues 282–395 (RFIPSKHEAK…LRHVPGYSES (114 aa)) are required for interaction with NOP7. The interval 395-431 (SVRERFERSLDLYLAPRVRKNKLNIDPDSLIPDLPSP) is required for interaction with YTM1. WD repeat units lie at residues 447 to 486 (GHKG…ELYR) and 495 to 535 (AQDD…FDIE). Residues 545-585 (GWGFAEGGREQQDIDTKGLDDDADSDSDDETGHVKKKSPPA) form a disordered region. The segment covering 551-564 (GGREQQDIDTKGLD) has biased composition (basic and acidic residues). WD repeat units follow at residues 604 to 646 (TATK…SQSP), 649 to 687 (KSKG…MAKK), 690 to 729 (PGAR…KPYK), 733 to 773 (YHEK…DMMT), and 789 to 820 (KSGL…LWTT).

Belongs to the WD repeat BOP1/ERB1 family. Component of the NOP7 complex, composed of ERB1, NOP7 and YTM1. The complex is held together by ERB1, which interacts with NOP7 via its N-terminal domain and with YTM1 via a high-affinity interaction between the seven-bladed beta-propeller domains of the 2 proteins. The NOP7 complex associates with the 66S pre-ribosome.

It is found in the nucleus. It localises to the nucleolus. The protein resides in the nucleoplasm. In terms of biological role, component of the NOP7 complex, which is required for maturation of the 25S and 5.8S ribosomal RNAs and formation of the 60S ribosome. The protein is Ribosome biogenesis protein ERB1 of Yarrowia lipolytica (strain CLIB 122 / E 150) (Yeast).